The chain runs to 192 residues: MLSFLSSNLSSTRQSLAQVLNFALVLSTAFMLWKGLSVFTASSSPIVVVLSGSMEPAFQRGDLLFLWNRSPRAELGEIVVYNVRGKDIPIVHRVVRTFPEVEGKAKKVKEITGTSSIPPNMLLTKGDNNVADDTELYAKNQDFLHREEDIVGSVRGYMPMVGYVTIMLSEHPWLKTVLLGIMGLMVILQREQ.

Residues 1–18 are Cytoplasmic-facing; sequence MLSFLSSNLSSTRQSLAQ. Residues 19 to 39 traverse the membrane as a helical; Signal-anchor for type II membrane protein segment; sequence VLNFALVLSTAFMLWKGLSVF. The Lumenal portion of the chain corresponds to 40–192; the sequence is TASSSPIVVV…GLMVILQREQ (153 aa). Active-site charge relay system residues include serine 53, histidine 92, and aspartate 133. A C-terminal short (CTS) helix region spans residues 177–188; the sequence is VLLGIMGLMVIL.

This sequence belongs to the peptidase S26B family. As to quaternary structure, component of the signal peptidase complex (SPC) composed of a catalytic subunit SEC11 and three accessory subunits SPC1, SPC2 and SPC3. The complex induces a local thinning of the ER membrane which is used to measure the length of the signal peptide (SP) h-region of protein substrates. This ensures the selectivity of the complex towards h-regions shorter than 18-20 amino acids. SPC associates with the translocon complex.

It is found in the endoplasmic reticulum membrane. It carries out the reaction Cleavage of hydrophobic, N-terminal signal or leader sequences from secreted and periplasmic proteins.. Catalytic component of the signal peptidase complex (SPC) which catalyzes the cleavage of N-terminal signal sequences from nascent proteins as they are translocated into the lumen of the endoplasmic reticulum. Specifically cleaves N-terminal signal peptides that contain a hydrophobic alpha-helix (h-region) shorter than 18-20 amino acids. This is Signal peptidase complex catalytic subunit sec11 (sec11) from Aspergillus clavatus (strain ATCC 1007 / CBS 513.65 / DSM 816 / NCTC 3887 / NRRL 1 / QM 1276 / 107).